The sequence spans 609 residues: Alpha-glucosides permease MPH2 (609 aa).

Residues 1 to 106 lie on the Cytoplasmic side of the membrane; the sequence is MKNLSFLINR…AAAWSLLVST (106 aa). A helical transmembrane segment spans residues 107-127; sequence TLIMEGYDTAILGAFYALPIF. The Extracellular segment spans residues 128–142; sequence QRKFGSQNDKTGEWE. A helical membrane pass occupies residues 143–163; sequence ISASWQIGLTLCYMAGEIVGL. Over 164 to 178 the chain is Cytoplasmic; it reads QLTGPSVDLVGNRYT. The helical transmembrane segment at 179 to 199 threads the bilayer; it reads LIIALFFLAAFTFILYFCNSL. Position 200 (Gly-200) is a topological domain, extracellular. A helical transmembrane segment spans residues 201–221; it reads MIAVGQALCGMPWGCFQCLTV. Topologically, residues 222–234 are cytoplasmic; that stretch reads SYASEICPLALRY. The helical transmembrane segment at 235-255 threads the bilayer; the sequence is YLTTYSNLCWLFGQLFAAGIM. Topologically, residues 256 to 270 are extracellular; sequence KNSQKKYADSELGYK. A helical membrane pass occupies residues 271–291; sequence LPFALQWILPVPLALGIFFAP. Residues 292-363 are Cytoplasmic-facing; it reads ESPWWLVKKG…EDKINRRRTR (72 aa). A helical transmembrane segment spans residues 364–384; sequence ITCLCWAGQATCGSILIGYST. Residues 385 to 397 lie on the Extracellular side of the membrane; that stretch reads YFYEKAGVSTEMS. Residues 398–418 form a helical membrane-spanning segment; it reads FTFSIIQYCLGICATFLSWWA. The Cytoplasmic segment spans residues 419 to 426; the sequence is SKYFGRYD. Residues 427-447 form a helical membrane-spanning segment; that stretch reads LYAFGLAFQTIVFFIIGGLGC. The Extracellular segment spans residues 448-459; that stretch reads SSTHGSKMGSGS. The helical transmembrane segment at 460–480 threads the bilayer; it reads LLMAVAFFYNLGIAPVVFCLV. Residues 481-492 are Cytoplasmic-facing; it reads SEMPSSRLRTKT. The helical transmembrane segment at 493-513 threads the bilayer; that stretch reads IILARNTYNVVSIICSVLILY. The Extracellular segment spans residues 514–525; sequence QLNSKKWNWGAK. A helical membrane pass occupies residues 526–546; the sequence is SGFFWGVLCFCTLIWAVVDLP. At 547 to 609 the chain is on the cytoplasmic side; it reads ETAGKTFVEI…QRNSNVSHHL (63 aa).

This sequence belongs to the major facilitator superfamily. Sugar transporter (TC 2.A.1.1) family.

It localises to the cell membrane. In terms of biological role, high-affinity uptake of maltose and maltotriose. Also transports alpha-methylglucoside, glucose and turanose but not melezitose or trehalose. The protein is Alpha-glucosides permease MPH2 (MPH2) of Saccharomyces cerevisiae (strain ATCC 204508 / S288c) (Baker's yeast).